A 343-amino-acid chain; its full sequence is Dihydroorotase (343 aa).

Residues histidine 13 and histidine 15 each coordinate Zn(2+). Residues 15–17 (HFR) and asparagine 41 contribute to the substrate site. Zn(2+)-binding residues include lysine 98, histidine 135, and histidine 173. Residue lysine 98 is modified to N6-carboxylysine. Residue histidine 135 coordinates substrate. Substrate is bound at residue leucine 218. Residue aspartate 246 coordinates Zn(2+). Aspartate 246 is an active-site residue. Positions 250 and 262 each coordinate substrate.

Belongs to the metallo-dependent hydrolases superfamily. DHOase family. Class II DHOase subfamily. Homodimer. The cofactor is Zn(2+).

It carries out the reaction (S)-dihydroorotate + H2O = N-carbamoyl-L-aspartate + H(+). The protein operates within pyrimidine metabolism; UMP biosynthesis via de novo pathway; (S)-dihydroorotate from bicarbonate: step 3/3. Functionally, catalyzes the reversible cyclization of carbamoyl aspartate to dihydroorotate. The polypeptide is Dihydroorotase (Marinomonas sp. (strain MWYL1)).